The following is an 82-amino-acid chain: Diptericin-A (82 aa).

Disordered regions lie at residues 1–32 (DEKP…DGFG) and 45–69 (DNGG…GNSR). The residue at position 82 (Phe-82) is a Phenylalanine amide.

Belongs to the attacin/sarcotoxin-2 family.

Its subcellular location is the secreted. Functionally, antimicrobial peptide required to resist Gram-negative bacterial infections, regulated by Dredd. The chain is Diptericin-A from Protophormia terraenovae (Northern blowfly).